The sequence spans 205 residues: Ras-related protein RABB1a (205 aa).

13–20 (GDTGVGKS) serves as a coordination point for GTP. The Effector region signature appears at 35 to 43 (HDLTIGVEF). Residues 61–65 (DTAGQ), 119–122 (NKCD), and 149–150 (SA) each bind GTP. Residues 179 to 205 (ANEPGITPGPFGGKDASSSQQRRGCCG) are disordered. Over residues 194-205 (ASSSQQRRGCCG) the composition is skewed to polar residues. Residues Cys203 and Cys204 are each lipidated (S-geranylgeranyl cysteine).

The protein belongs to the small GTPase superfamily. Rab family.

It is found in the cell membrane. Its function is as follows. Intracellular vesicle trafficking and protein transport. This chain is Ras-related protein RABB1a (RABB1A), found in Arabidopsis thaliana (Mouse-ear cress).